Consider the following 311-residue polypeptide: MTKPAVQKNGLHPRNRHRDRYDFPTLKHSYPALIPFVTVNAYGDESVDFANPEAVKTLNQALLQHFYQIEHWEIPDGFLCPPIPGRADYIHHLADLLAEDNRAVVPREASVLDIGCGANCIYPLIGYREYGWRFTGSEINPIAMKAANQTIEANPGLNRAIRLRRQKSSTAILAGIIHKNETFDAVMCNPPFHASAEDARQGSQRKLHNLGLDKRSPLNFGGQQDELWCEGGESAFIGQMIKESAGFARQCLWFTSLVSRKENLPEIYRALEAVDAEKVRTIDMAQGQKQSRFVAWSFLDTAARTRWLQKR.

This sequence belongs to the methyltransferase superfamily. METTL16/RlmF family.

Its subcellular location is the cytoplasm. The enzyme catalyses adenosine(1618) in 23S rRNA + S-adenosyl-L-methionine = N(6)-methyladenosine(1618) in 23S rRNA + S-adenosyl-L-homocysteine + H(+). Functionally, specifically methylates the adenine in position 1618 of 23S rRNA. The chain is Ribosomal RNA large subunit methyltransferase F from Pectobacterium carotovorum subsp. carotovorum (strain PC1).